Consider the following 384-residue polypeptide: UDP-4-amino-4-deoxy-L-arabinose--oxoglutarate aminotransferase (384 aa).

Lys182 carries the post-translational modification N6-(pyridoxal phosphate)lysine.

The protein belongs to the DegT/DnrJ/EryC1 family. ArnB subfamily. As to quaternary structure, homodimer. It depends on pyridoxal 5'-phosphate as a cofactor.

It catalyses the reaction UDP-4-amino-4-deoxy-beta-L-arabinose + 2-oxoglutarate = UDP-beta-L-threo-pentopyranos-4-ulose + L-glutamate. It functions in the pathway nucleotide-sugar biosynthesis; UDP-4-deoxy-4-formamido-beta-L-arabinose biosynthesis; UDP-4-deoxy-4-formamido-beta-L-arabinose from UDP-alpha-D-glucuronate: step 2/3. It participates in bacterial outer membrane biogenesis; lipopolysaccharide biosynthesis. Catalyzes the conversion of UDP-4-keto-arabinose (UDP-Ara4O) to UDP-4-amino-4-deoxy-L-arabinose (UDP-L-Ara4N). The modified arabinose is attached to lipid A and is required for resistance to polymyxin and cationic antimicrobial peptides. This chain is UDP-4-amino-4-deoxy-L-arabinose--oxoglutarate aminotransferase, found in Yersinia pseudotuberculosis serotype O:1b (strain IP 31758).